The following is a 229-amino-acid chain: Large ribosomal subunit protein uL1 (229 aa).

The protein belongs to the universal ribosomal protein uL1 family. In terms of assembly, part of the 50S ribosomal subunit.

In terms of biological role, binds directly to 23S rRNA. The L1 stalk is quite mobile in the ribosome, and is involved in E site tRNA release. Functionally, protein L1 is also a translational repressor protein, it controls the translation of the L11 operon by binding to its mRNA. The chain is Large ribosomal subunit protein uL1 from Gemmatimonas aurantiaca (strain DSM 14586 / JCM 11422 / NBRC 100505 / T-27).